The sequence spans 106 residues: Large ribosomal subunit protein cL38 (106 aa).

The transit peptide at 1-39 (MSVSAIFGTGIVTVAASPVLRQFQVPKLGNGGGLGMVIE) directs the protein to the chloroplast. Residues 42–70 (SRPQKKSTAHHRKTRPKKTQPWDIKRKPT) are disordered. Over residues 44 to 59 (PQKKSTAHHRKTRPKK) the composition is skewed to basic residues.

The protein belongs to the chloroplast-specific ribosomal protein cL38 family. As to quaternary structure, part of the 50S ribosomal subunit.

The protein localises to the plastid. The protein resides in the chloroplast. The polypeptide is Large ribosomal subunit protein cL38 (PSRP6) (Arabidopsis thaliana (Mouse-ear cress)).